The primary structure comprises 226 residues: Lysoplasmalogenase TMEM86B (226 aa).

The Cytoplasmic segment spans residues 1–23 (MDARKEGLPLETLFSDQYPQVRR). Residues 24–40 (WLAPFILACSLYFLLWI) traverse the membrane as a helical segment. Topologically, residues 41 to 46 (PVDQPS) are extracellular. Residues 47–68 (WVSALIKCQPILCLVVFLWAVA) form a helical membrane-spanning segment. At 69–74 (PGGSST) the chain is on the cytoplasmic side. Residues 75–93 (WLLQGALVCSAVGDACLIW) traverse the membrane as a helical segment. At 94–99 (PEAFFY) the chain is on the extracellular side. The chain crosses the membrane as a helical span at residues 100–117 (GTAAFSVAHLFYLGAFGL). Residues 118-123 (TPLQPG) lie on the Cytoplasmic side of the membrane. Residues 124-140 (LLLCTTLASLTYYSFLL) form a helical membrane-spanning segment. Residues 141-146 (LHLEQG) are Extracellular-facing. The helical transmembrane segment at 147–163 (MVLPVMAYGLILNSMLW) threads the bilayer. The Cytoplasmic portion of the chain corresponds to 164–171 (RSLVWGGS). The helical transmembrane segment at 172–188 (ASWGAVLFTFSDGVLAW) threads the bilayer. Over 189–199 (DTFVYSLPFAR) the chain is Extracellular. The helical transmembrane segment at 200–218 (LVTMSTYYAAQLLLILSAL) threads the bilayer. Residues 219–226 (RNPGLKTH) are Cytoplasmic-facing.

The protein belongs to the TMEM86 family. In terms of assembly, homodimer. As to expression, enriched in liver. Also detected in brain and testis.

The protein resides in the endoplasmic reticulum membrane. Its subcellular location is the cytoplasm. It catalyses the reaction a 1-O-(1Z-alkenyl)-sn-glycero-3-phosphocholine + H2O = a 2,3-saturated aldehyde + sn-glycerol 3-phosphocholine. It carries out the reaction a 1-O-(1Z-alkenyl)-sn-glycero-3-phosphoethanolamine + H2O = a 2,3-saturated aldehyde + sn-glycero-3-phosphoethanolamine. Its activity is regulated as follows. Competitively inhibited by lysophosphatidic acid. In terms of biological role, catalyzes the hydrolysis of the vinyl ether bond of choline or ethanolamine lysoplasmalogens, forming fatty aldehyde and glycerophosphocholine or glycerophosphoethanolamine, respectively and is specific for the sn-2-deacylated (lyso) form of plasmalogen. In Mus musculus (Mouse), this protein is Lysoplasmalogenase TMEM86B (Tmem86b).